The primary structure comprises 36 residues: MSDIN-like toxin proprotein 10 (36 aa).

A propeptide spanning residues 1–10 is cleaved from the precursor; that stretch reads MSDINATRLP. A cross-link (cyclopeptide (Gly-Pro)) is located at residues 11 to 19; that stretch reads GAYPPVPMP. A propeptide spanning residues 20–36 is cleaved from the precursor; sequence CVGDADNFTLTRGENLC.

It belongs to the MSDIN fungal toxin family. Post-translationally, processed by the macrocyclase-peptidase enzyme POPB to yield a toxic cyclic nonapeptide. POPB first removes 10 residues from the N-terminus. Conformational trapping of the remaining peptide forces the enzyme to release this intermediate rather than proceed to macrocyclization. The enzyme rebinds the remaining peptide in a different conformation and catalyzes macrocyclization of the N-terminal 9 residues.

Probable toxin that belongs to the MSDIN-like toxin family responsible for a large number of food poisoning cases and deaths. The polypeptide is MSDIN-like toxin proprotein 10 (Amanita bisporigera (Destroying angel)).